We begin with the raw amino-acid sequence, 575 residues long: Thiol:disulfide interchange protein DsbD (575 aa).

Residues 1–24 (MIKRTLMLFLLLCSPLLTPAAANA) form the signal peptide. 2 cysteine pairs are disulfide-bonded: Cys-126–Cys-132 and Cys-192–Cys-314. 8 consecutive transmembrane segments (helical) span residues 180 to 200 (AILI…YPLI), 216 to 236 (IFWL…LLGL), 253 to 273 (YVLI…FGLY), 297 to 317 (LFGV…CTTA), 336 to 356 (GLTL…VTLF), 367 to 387 (WMQY…VFLL), 394 to 414 (AWGI…GFVL), and 425 to 445 (VIQL…QDWF). The Thioredoxin domain occupies 444-575 (WFWGTTVTQQ…FNEHLQHLPK (132 aa)). Cys-490 and Cys-493 are disulfide-bonded.

The protein belongs to the thioredoxin family. DsbD subfamily.

The protein localises to the cell inner membrane. The enzyme catalyses [protein]-dithiol + NAD(+) = [protein]-disulfide + NADH + H(+). It carries out the reaction [protein]-dithiol + NADP(+) = [protein]-disulfide + NADPH + H(+). Required to facilitate the formation of correct disulfide bonds in some periplasmic proteins and for the assembly of the periplasmic c-type cytochromes. Acts by transferring electrons from cytoplasmic thioredoxin to the periplasm. This transfer involves a cascade of disulfide bond formation and reduction steps. The chain is Thiol:disulfide interchange protein DsbD from Photorhabdus laumondii subsp. laumondii (strain DSM 15139 / CIP 105565 / TT01) (Photorhabdus luminescens subsp. laumondii).